We begin with the raw amino-acid sequence, 887 residues long: MLSRLFRMHGLFVASHPWEVIVGTVTLTICMMSMNMFTGNNKICGWNYECPKFEEDVLSSDIIILTITRCIAILYIYFQFQNLRQLGSKYILGIAGLFTIFSSFVFSTVVIHFLDKELTGLNEALPFFLLLIDLSRASALAKFALSSNSQDEVRENIARGMAILGPTFTLDALVECLVIGVGTMSGVRQLEIMCCFGCMSVLANYFVFMTFFPACVSLVLELSRESREGRPIWQLSHFARVLEEEENKPNPVTQRVKMIMSLGLVLVHAHSRWIADPSPQNSTTEHSKVSLGLDEDVSKRIEPSVSLWQFYLSKMISMDIEQVVTLSLAFLLAVKYIFFEQAETESTLSLKNPITSPVVTPKKAPDNCCRREPLLVRRSEKLSSVEEEPGVSQDRKVEVIKPLVVETESASRATFVLGASGTSPPVAARTQELEIELPSEPRPNEECLQILESAEKGAKFLSDAEIIQLVNAKHIPAYKLETLMETHERGVSIRRQLLSTKLPEPSSLQYLPYRDYNYSLVMGACCENVIGYMPIPVGVAGPLCLDGKEYQVPMATTEGCLVASTNRGCRAIGLGGGASSRVLADGMTRGPVVRLPRACDSAEVKAWLETPEGFAVIKDAFDSTSRFARLQKLHVTMAGRNLYIRFQSKTGDAMGMNMISKGTEKALLKLQEFFPEMQILAVSGNYCTDKKPAAINWIEGRGKTVVCEAVIPAKVVREVLKTTTEAMIDVNINKNLVGSAMAGSIGGYNAHAANIVTAIYIACGQDAAQNVGSSNCITLMEASGPTNEDLYISCTMPSIEIGTVGGGTNLLPQQACLQMLGVQGACKDNPGENARQLARIVCGTVMAGELSLMAALAAGHLVRSHMVHNRSKINLQDLQGTCTKKSA.

Topologically, residues 1-9 (MLSRLFRMH) are cytoplasmic. A helical transmembrane segment spans residues 10 to 39 (GLFVASHPWEVIVGTVTLTICMMSMNMFTG). Topologically, residues 40 to 56 (NNKICGWNYECPKFEED) are lumenal. Residues 57–78 (VLSSDIIILTITRCIAILYIYF) traverse the membrane as a helical segment. The 158-residue stretch at 61-218 (DIIILTITRC…MTFFPACVSL (158 aa)) folds into the SSD domain. An INSIG-binding motif motif is present at residues 75–78 (YIYF). The Cytoplasmic segment spans residues 79–89 (QFQNLRQLGSK). Residue Lys89 forms a Glycyl lysine isopeptide (Lys-Gly) (interchain with G-Cter in ubiquitin) linkage. Residues 90–114 (YILGIAGLFTIFSSFVFSTVVIHFL) traverse the membrane as a helical segment. Topologically, residues 115 to 123 (DKELTGLNE) are lumenal. Residues 124-149 (ALPFFLLLIDLSRASALAKFALSSNS) form a helical membrane-spanning segment. Topologically, residues 150–159 (QDEVRENIAR) are cytoplasmic. Residues 160–187 (GMAILGPTFTLDALVECLVIGVGTMSGV) traverse the membrane as a helical segment. Residues 188–191 (RQLE) are Lumenal-facing. Residues 192-220 (IMCCFGCMSVLANYFVFMTFFPACVSLVL) traverse the membrane as a helical segment. The Cytoplasmic portion of the chain corresponds to 221 to 248 (ELSRESREGRPIWQLSHFARVLEEEENK). Residue Lys248 forms a Glycyl lysine isopeptide (Lys-Gly) (interchain with G-Cter in ubiquitin) linkage. The helical transmembrane segment at 249-275 (PNPVTQRVKMIMSLGLVLVHAHSRWIA) threads the bilayer. Over 276–314 (DPSPQNSTTEHSKVSLGLDEDVSKRIEPSVSLWQFYLSK) the chain is Lumenal. Asn281 carries an N-linked (GlcNAc...) asparagine glycan. The chain crosses the membrane as a helical span at residues 315–339 (MISMDIEQVVTLSLAFLLAVKYIFF). Residues 340–887 (EQAETESTLS…LQGTCTKKSA (548 aa)) are Cytoplasmic-facing. Active-site charge relay system residues include Glu558, Lys690, and Asp766. Catalysis depends on His865, which acts as the Proton donor. A Phosphoserine; by AMPK modification is found at Ser871.

The protein belongs to the HMG-CoA reductase family. As to quaternary structure, homotetramer. Homodimer. Interacts (via its SSD) with INSIG1; the interaction, accelerated by sterols, leads to the recruitment of HMGCR to AMFR/gp78 for its ubiquitination by the sterol-mediated ERAD pathway. Interacts with UBIAD1. In terms of processing, N-glycosylated. Glycosylated with high mannose chains including Man(6)(GlcNAc)(2), Man(7)(GlcNAc)(2) and Man(8)(GlcNAc)(2). Deglycosylated by NGLY1 on release from the endoplasmic reticulum (ER) in a sterol-mediated manner. Post-translationally, undergoes sterol-mediated ubiquitination and ER-associated degradation (ERAD). Accumulation of sterols in the endoplasmic reticulum (ER) membrane, triggers binding of the reductase to the ER membrane protein INSIG1 or INSIG2. The INSIG1 binding leads to the recruitment of the ubiquitin ligase, AMFR/gp78, RNF139 or RNF145, initiating ubiquitination of the reductase. The ubiquitinated reductase is then extracted from the ER membrane and delivered to cytosolic 26S proteosomes by a mechanism probably mediated by the ATPase Valosin-containing protein VCP/p97. The INSIG2-binding leads to the recruitment of the ubiquitin ligase RNF139, initiating ubiquitination of the reductase. Lys-248 is the main site of ubiquitination. Ubiquitination is enhanced by the presence of a geranylgeranylated protein. Phosphorylated. Phosphorylation at Ser-871 reduces the catalytic activity.

Its subcellular location is the endoplasmic reticulum membrane. It is found in the peroxisome membrane. The enzyme catalyses (R)-mevalonate + 2 NADP(+) + CoA = (3S)-3-hydroxy-3-methylglutaryl-CoA + 2 NADPH + 2 H(+). It participates in metabolic intermediate biosynthesis; (R)-mevalonate biosynthesis; (R)-mevalonate from acetyl-CoA: step 3/3. Its activity is regulated as follows. Regulated by a negative feedback mechanism through sterols and non-sterol metabolites derived from mevalonate. Phosphorylation at Ser-871 down-regulates the catalytic activity. In terms of biological role, catalyzes the conversion of (3S)-hydroxy-3-methylglutaryl-CoA (HMG-CoA) to mevalonic acid, the rate-limiting step in the synthesis of cholesterol and other isoprenoids, thus plays a critical role in cellular cholesterol homeostasis. The polypeptide is 3-hydroxy-3-methylglutaryl-coenzyme A reductase (HMGCR) (Cricetulus griseus (Chinese hamster)).